The primary structure comprises 245 residues: MILFPAIDLKNGQCVRLEQGDMDRATVFNLDPAAQAASFAAQGFEYLHVVDLDGAFAGKPMNAQAVEAMLKVVKMPVQLGGGIRDLATIEAWLGKGVTRVIIGTAAVRDPALVKEAAKQFPGRVAVGLDARDGKVAVQGWAETSTVTALEIAQRFEDAGVAAIIFTDIARDGLLKGLNLDATIALAEAISIPVIASGGFASIDDVKALLEPRAKKLEGAIVGRALYDGRLDPAEALALIGRAAAA.

Residue D8 is the Proton acceptor of the active site. The active-site Proton donor is D129.

The protein belongs to the HisA/HisF family.

The protein resides in the cytoplasm. It carries out the reaction 1-(5-phospho-beta-D-ribosyl)-5-[(5-phospho-beta-D-ribosylamino)methylideneamino]imidazole-4-carboxamide = 5-[(5-phospho-1-deoxy-D-ribulos-1-ylimino)methylamino]-1-(5-phospho-beta-D-ribosyl)imidazole-4-carboxamide. The protein operates within amino-acid biosynthesis; L-histidine biosynthesis; L-histidine from 5-phospho-alpha-D-ribose 1-diphosphate: step 4/9. The sequence is that of 1-(5-phosphoribosyl)-5-[(5-phosphoribosylamino)methylideneamino] imidazole-4-carboxamide isomerase from Rhodopseudomonas palustris (strain BisA53).